We begin with the raw amino-acid sequence, 315 residues long: tRNA wybutosine-synthesizing protein 5 (315 aa).

Residues 102–267 (DEKYYLRSLG…YDKTDTYGNK (166 aa)) enclose the JmjC domain. Tyr-106 is a binding site for 2-oxoglutarate. Residues His-160 and Asp-162 each contribute to the Fe cation site. 2-oxoglutarate-binding residues include Asn-166 and Lys-175. His-235 is a Fe cation binding site.

Belongs to the TYW5 family. As to quaternary structure, homodimer. It depends on Fe(2+) as a cofactor.

The catalysed reaction is 7-[(3S)-3-amino-3-carboxypropyl]wyosine(37) in tRNA(Phe) + 2-oxoglutarate + O2 = 7-(2-hydroxy-3-amino-3-carboxypropyl)wyosine(37) in tRNA(Phe) + succinate + CO2. Its pathway is tRNA modification; wybutosine-tRNA(Phe) biosynthesis. TRNA hydroxylase that acts as a component of the wybutosine biosynthesis pathway. Wybutosine is a hyper modified guanosine with a tricyclic base found at the 3'-position adjacent to the anticodon of eukaryotic phenylalanine tRNA. Catalyzes the hydroxylation of 7-(a-amino-a-carboxypropyl)wyosine (yW-72) into undermodified hydroxywybutosine (OHyW*). OHyW* being further transformed into hydroxywybutosine (OHyW) by LCMT2/TYW4. OHyW is a derivative of wybutosine found in higher eukaryotes. The polypeptide is tRNA wybutosine-synthesizing protein 5 (TYW5) (Homo sapiens (Human)).